Here is a 519-residue protein sequence, read N- to C-terminus: F-box-like/WD repeat-containing protein TBL1XR1-A (519 aa).

In terms of domain architecture, LisH spans 4 to 36 (SSDEVNFLVYRYLQESGFSHSAFTFGIESHISQ). The 46-residue stretch at 41 to 86 (GALAPPAALISIIQKGLQYVEAEVSINEDGTLFDGRPIESLSLIDA) folds into the F-box-like domain. The segment covering 115 to 139 (AAAAAATPNNQQPPAKNGENTANGE) has biased composition (low complexity). Residues 115 to 147 (AAAAAATPNNQQPPAKNGENTANGEENGGHALA) are disordered. 8 WD repeats span residues 172–211 (GHESEVFICAWNPVSDLLASGSGDSTARIWNLSENSTSGS), 228–267 (PSNKDVTSLDWNSEGTLLATGSYDGFARIWTKDGNLASTL), 269–308 (QHKGPIFALKWNKKGNFILSAGVDKTTIIWDAHTGEAKQQ), 311–349 (FHSAPALDVDWQSNNTFASCSTDMCIHVCKLGQDRPIKT), 352–391 (GHTNEVNAIKWDPTGNLLASCSDDMTLKIWSMKHDTCVHD), 394–442 (AHNK…CIHT), 445–484 (KHQEPVYSVAFSPDGRYLASGSFDKCVHIWNTQTGALVHS), and 486–519 (RGTGGIFEVCWNAAGDKVGASASDGSVCVLDLRK).

This sequence belongs to the WD repeat EBI family. In terms of assembly, interacts with heterodimers of rxra and thrb, and this interaction is abrogated by thyroid hormone binding to thrb. Interacts with ncor1.

The protein resides in the nucleus. Its function is as follows. F-box-like protein which acts as an integral component of the N-CoR transcriptional corepressor complex. Probably regulates transcription activation mediated by nuclear receptors. May mediate the recruitment of the 19S proteasome complex, leading to the subsequent proteasomal degradation of the N-CoR complex, thereby allowing cofactor exchange and transcription activation. In Xenopus laevis (African clawed frog), this protein is F-box-like/WD repeat-containing protein TBL1XR1-A (tbl1xr1-a).